A 488-amino-acid chain; its full sequence is Rhamnulokinase (488 aa).

Residue 13–17 (ASSGR) participates in ATP binding. An intrachain disulfide couples C68 to C222. Substrate-binding positions include G83 and 236-238 (HDT). D237 (proton acceptor) is an active-site residue. T259 contacts ATP. N296 provides a ligand contact to substrate. Q304 is an ATP binding site. C353 and C370 are joined by a disulfide. Position 402 (G402) interacts with ATP. C413 and C417 form a disulfide bridge.

The protein belongs to the rhamnulokinase family. It depends on Mg(2+) as a cofactor.

It catalyses the reaction L-rhamnulose + ATP = L-rhamnulose 1-phosphate + ADP + H(+). The protein operates within carbohydrate degradation; L-rhamnose degradation; glycerone phosphate from L-rhamnose: step 2/3. Functionally, involved in the catabolism of L-rhamnose (6-deoxy-L-mannose). Catalyzes the transfer of the gamma-phosphate group from ATP to the 1-hydroxyl group of L-rhamnulose to yield L-rhamnulose 1-phosphate. In Klebsiella pneumoniae (strain 342), this protein is Rhamnulokinase.